Here is a 130-residue protein sequence, read N- to C-terminus: uncharacterized protein (130 aa).

The protein belongs to the HesB/IscA family.

This is an uncharacterized protein from Buchnera aphidicola subsp. Acyrthosiphon pisum (strain APS) (Acyrthosiphon pisum symbiotic bacterium).